Consider the following 550-residue polypeptide: GMP synthase [glutamine-hydrolyzing] (550 aa).

The Glutamine amidotransferase type-1 domain maps to 39 to 232; it reads RILILDFGSQ…VHKICGCGGL (194 aa). Cys-116 functions as the Nucleophile in the catalytic mechanism. Active-site residues include His-206 and Glu-208. The GMPS ATP-PPase domain occupies 233-425; it reads WTPEHIIDLR…LGLPHSMIYR (193 aa). ATP is bound at residue 260–266; the sequence is SGGVDSS.

In terms of assembly, homodimer.

It catalyses the reaction XMP + L-glutamine + ATP + H2O = GMP + L-glutamate + AMP + diphosphate + 2 H(+). It functions in the pathway purine metabolism; GMP biosynthesis; GMP from XMP (L-Gln route): step 1/1. Functionally, catalyzes the synthesis of GMP from XMP. This chain is GMP synthase [glutamine-hydrolyzing], found in Acinetobacter baylyi (strain ATCC 33305 / BD413 / ADP1).